Reading from the N-terminus, the 395-residue chain is MPRVIYFDCFSGISGDMALGALLDAGLSLDALREALRRLNVDGWDLNAMREVRGPLAGTRAHVIAPEGHVHRTLDDIRAIISTSSLPAAVIERSMRIFAILAEAEAQVHGTTVDRIHFHEVGALDAIVDIVGVAAGLDLLGVEQVFASPLPLGAGWVRSAHGPLPIPSPATLAILASVGAPITPDETPFELTTPTGAAILAALATFRRPSMRLCAIGYGFGARQMERPNALRVWLGDPDEEEDASRQRGLVLLETNIDDQPAEQIAYATDVLRAAGALDVWCTPILMKKGRPGVQLSALVTADLEDTAVSLLMCETTTLGVRRRTVERHVCDRDIVEIATPLGVARVKRKRWRGELIGAAPEYEDCARIAREHGVPLAAVYQMVMGRLENGATKC.

This sequence belongs to the LarC family.

This is Putative nickel insertion protein from Roseiflexus castenholzii (strain DSM 13941 / HLO8).